The sequence spans 451 residues: MKFGKLHEFIYSLSTQDKYSEFDPKKSFNRVNTQETELLFSHHNQSTASLIGGPTNDVDSTVNKNQFDGVHEVRLAWRHIKNWLLKYSPDLNSTLQSPCTDADLSDFQKDLNIKLPNCLIEFYKITDGQSYFNDNGSGGLVFGLKLMPIDEVMVMTEHWRKVADYLNSKLLHANQTNKLQELSKLETSHANSSQLKFSSSNLDLIEPVKIAKQQRHESAGSPNIPRQKSIPPGTIHDSFAHPMWIPIITDEVGNCIGIDLCPPTNGGGTWGQVILFGREFDNKYLIADNFGDFLLIFANDLEMGNWDFRSSLANNNQDLLIGSEGELVFVEKGTNKEIPYLEVLKKRCIEKWLSSLNESNSEKSEEIKHLIKDLNSNTSSILKFKNSMDQFVNNNISSIEGISDPIIHSENQIAGGSDNAKNQVKLGETSDTKQDDTSKIASTVSTSDEDE.

Over residues 410 to 422 the composition is skewed to polar residues; it reads ENQIAGGSDNAKN. The segment at 410-451 is disordered; the sequence is ENQIAGGSDNAKNQVKLGETSDTKQDDTSKIASTVSTSDEDE. Residues 428–438 are compositionally biased toward basic and acidic residues; the sequence is ETSDTKQDDTS. Over residues 439–451 the composition is skewed to polar residues; the sequence is KIASTVSTSDEDE.

This sequence belongs to the KNR4/SMI1 family.

This is KNR4/SMI1 homolog 1 from Debaryomyces hansenii (strain ATCC 36239 / CBS 767 / BCRC 21394 / JCM 1990 / NBRC 0083 / IGC 2968) (Yeast).